The sequence spans 493 residues: Signal recognition particle subunit SRP54 3 (493 aa).

The G-domain stretch occupies residues 1–294 (MVLADVGGSI…NVEPFVARLL (294 aa)). Residues 107–114 (GLQGSGKT), 189–193 (DTSGR), and 247–250 (TKLD) each bind GTP. An M-domain region spans residues 295–493 (GRGDLPGLID…KMLAGMRGGA (199 aa)).

Belongs to the GTP-binding SRP family. SRP54 subfamily. Component of a signal recognition particle (SRP) complex that consists of a 7SL RNA molecule of 300 nucleotides and six protein subunits: SRP72, SRP68, SRP54, SRP19, SRP14 and SRP9.

It is found in the cytoplasm. Its subcellular location is the endoplasmic reticulum. The catalysed reaction is GTP + H2O = GDP + phosphate + H(+). In terms of biological role, component of the signal recognition particle (SRP) complex, a ribonucleoprotein complex that mediates the cotranslational targeting of secretory and membrane proteins to the endoplasmic reticulum (ER). As part of the SRP complex, associates with the SRP receptor (SR) component SRPRA to target secretory proteins to the endoplasmic reticulum membrane. Binds to the signal sequence of presecretory proteins when they emerge from the ribosomes. Displays basal GTPase activity, and stimulates reciprocal GTPase activation of the SR subunit SRPRA. Forms a guanosine 5'-triphosphate (GTP)-dependent complex with the SR subunit SRPRA. SR compaction and GTPase mediated rearrangement of SR drive SRP-mediated cotranslational protein translocation into the ER. Requires the presence of SRP9/SRP14 and/or SRP19 to stably interact with RNA. This Hordeum vulgare (Barley) protein is Signal recognition particle subunit SRP54 3 (SRP54-3).